Reading from the N-terminus, the 469-residue chain is 3-isopropylmalate dehydratase large subunit (469 aa).

[4Fe-4S] cluster is bound by residues cysteine 347, cysteine 408, and cysteine 411.

Belongs to the aconitase/IPM isomerase family. LeuC type 1 subfamily. In terms of assembly, heterodimer of LeuC and LeuD. [4Fe-4S] cluster is required as a cofactor.

It carries out the reaction (2R,3S)-3-isopropylmalate = (2S)-2-isopropylmalate. The protein operates within amino-acid biosynthesis; L-leucine biosynthesis; L-leucine from 3-methyl-2-oxobutanoate: step 2/4. Functionally, catalyzes the isomerization between 2-isopropylmalate and 3-isopropylmalate, via the formation of 2-isopropylmaleate. This is 3-isopropylmalate dehydratase large subunit from Actinobacillus pleuropneumoniae serotype 3 (strain JL03).